Here is a 1096-residue protein sequence, read N- to C-terminus: MSRSAIQVAKTATYLPDLVEVQRASFKWFLEKGLIEELENFSPITDYTGKLELHFIGSEYRLKRPRHDVEEAKRRDATFASQMYVTCRLVNKETGEIKEQEVFIGELPLMTERGTFIINGAERVIVNQIVRSPGVYFKDEQDKNGRRTYNASVIPNRGAWLKFETDKNDLLHVRVDKTRKINAHVLMRAMGLSDNDVIDKLRHPEYYKKSIQAADDEGISSEDQALLELYKKLRPGEPPSVSGGQQLLQSRFFDAKRYDLGRVGRYKINKKLRLTIPDSVRTLTHEDVLSTIDYLINLELDVGGATLDDIDHLGNRRVRSVGELLQNQVRVGLNRLERIIKERMTVGETDSLTPAQLVNPKPLVAAIKEFFGSSQLSQFMDQTNPLAELTHKRRISALGPGGLTRERAGFAVRDIHPSHYGRLCPIETPEGPNAGLINSLATHARVNSYGFIETPFWKVEEGRVIKVGDPIYLSADLEDECRVAPGDVATDKDGMILADLIPVRYRQDFEKVPPAQVDYVQLSPVQVISVATSLIPFVEHDDANRALMGSNMQRQAVPLLRPERPLVGTGLETQVARDSGMVPISQVNGTVTYVDANSIVVTDDEGGEHLHELQKYQRSNQDTCLNQRPIVRNGDKVIIGQVLADGSACEGGEIALGQNVLIAYMPWEGYNYEDAILVSERLVKDDLYTSVHIEKYEIEARQTKLGPEEITREIPNIAEESLGNLDEMGIIRVGAFVESGDILVGKVTPKGESDQPPEEKLLRAIFGEKARDVRDNSLRVPSTEKGRVVDVRIYTREQGDELPPGANMVVRVYVAQRRKIQVGDKMAGRHGNKGIISRILPREDMPYLPDGTPVDIVLNPLGVPSRMNVGQVFELLMGWAAANLDCRVKVVPFDEMYGAEKSYETVQLYLKEAAKQPGKEWVFNPDDPGKLLLRDGRTGEAFDQPVAVGYSHFLKLVHLVDDKIHARSTGPYSLVTQQPLGGKAQQGGQRLGEMEVWALEAYGAAYTLQELLTVKSDDMQGRNEALNAIVKGKPIPRPGTPESFKVLMRELQSLGLDIGVYTDEGKEVDLMQDVNPRRSTPSRPTYESLGSDYQED.

The interval 1069–1096 (DLMQDVNPRRSTPSRPTYESLGSDYQED) is disordered.

The protein belongs to the RNA polymerase beta chain family. In terms of assembly, in cyanobacteria the RNAP catalytic core is composed of 2 alpha, 1 beta, 1 beta', 1 gamma and 1 omega subunit. When a sigma factor is associated with the core the holoenzyme is formed, which can initiate transcription.

It catalyses the reaction RNA(n) + a ribonucleoside 5'-triphosphate = RNA(n+1) + diphosphate. DNA-dependent RNA polymerase catalyzes the transcription of DNA into RNA using the four ribonucleoside triphosphates as substrates. The chain is DNA-directed RNA polymerase subunit beta from Prochlorococcus marinus (strain SARG / CCMP1375 / SS120).